The sequence spans 264 residues: Major prion protein (264 aa).

Positions 1 to 24 are cleaved as a signal peptide; that stretch reads MVKSHIGSWILVLFVAMWSDVGLC. The interaction with GRB2, ERI3 and SYN1 stretch occupies residues 25 to 241; it reads KKRPKPGGGW…ESQAYYQRGA (217 aa). Residues 28–119 form a disordered region; the sequence is PKPGGGWNTG…WNKPSKPKTN (92 aa). 6 repeat units span residues 54–62, 63–70, 71–78, 79–86, 87–94, and 95–103. Residues 54 to 103 are 6 X 8 AA tandem repeats of P-H-G-G-G-W-G-Q; it reads PQGGGGWGQPHGGGWGQPHGGGWGQPHGGGWGQPHGGGWGQPHGGGGWGQ. Gly residues predominate over residues 55–105; that stretch reads QGGGGWGQPHGGGWGQPHGGGWGQPHGGGWGQPHGGGWGQPHGGGGWGQGG. Residues His-72, Gly-73, Gly-74, His-80, Gly-81, Gly-82, His-88, Gly-89, Gly-90, His-96, Gly-98, and Gly-99 each contribute to the Cu(2+) site. A disulfide bridge connects residues Cys-190 and Cys-225. N-linked (GlcNAc...) asparagine glycosylation is found at Asn-192 and Asn-208. A lipid anchor (GPI-anchor amidated alanine) is attached at Ala-241. Residues 242–264 constitute a propeptide, removed in mature form; sequence SVILFSSPPVILLISFLIFLIVG.

This sequence belongs to the prion family. In terms of assembly, monomer and homodimer. Has a tendency to aggregate into amyloid fibrils containing a cross-beta spine, formed by a steric zipper of superposed beta-strands. Soluble oligomers may represent an intermediate stage on the path to fibril formation. Copper binding may promote oligomerization. Interacts with GRB2, APP, ERI3/PRNPIP and SYN1. Mislocalized cytosolically exposed PrP interacts with MGRN1; this interaction alters MGRN1 subcellular location and causes lysosomal enlargement. Interacts with KIAA1191.

Its subcellular location is the cell membrane. The protein resides in the golgi apparatus. Its primary physiological function is unclear. Has cytoprotective activity against internal or environmental stresses. May play a role in neuronal development and synaptic plasticity. May be required for neuronal myelin sheath maintenance. May play a role in iron uptake and iron homeostasis. Soluble oligomers are toxic to cultured neuroblastoma cells and induce apoptosis (in vitro). Association with GPC1 (via its heparan sulfate chains) targets PRNP to lipid rafts. Also provides Cu(2+) or Zn(2+) for the ascorbate-mediated GPC1 deaminase degradation of its heparan sulfate side chains. This Antilope cervicapra (Blackbuck) protein is Major prion protein (PRNP).